Here is a 226-residue protein sequence, read N- to C-terminus: PKHD-type hydroxylase PFL_0865 (226 aa).

In terms of domain architecture, Fe2OG dioxygenase spans K78 to S178. Fe cation-binding residues include H96, D98, and H159. R169 is a 2-oxoglutarate binding site.

The cofactor is Fe(2+). It depends on L-ascorbate as a cofactor.

The sequence is that of PKHD-type hydroxylase PFL_0865 from Pseudomonas fluorescens (strain ATCC BAA-477 / NRRL B-23932 / Pf-5).